The sequence spans 433 residues: Enolase (433 aa).

(2R)-2-phosphoglycerate is bound at residue Gln167. The Proton donor role is filled by Glu209. Asp246, Glu291, and Asp318 together coordinate Mg(2+). Lys326 is modified (N6-acetyllysine). Positions 343, 372, 373, and 394 each coordinate (2R)-2-phosphoglycerate. Lys343 (proton acceptor) is an active-site residue. An N6-(2-hydroxyisobutyryl)lysine modification is found at Lys343.

This sequence belongs to the enolase family. As to quaternary structure, component of the RNA degradosome, a multiprotein complex involved in RNA processing and mRNA degradation. The cofactor is Mg(2+). Acetylated and 2-hydroxyisobutyrylated at Lys-326 and Lys-343, respectively, reducing the enolase activity. Deacetylated and de-2-hydroxyisobutyrylated by NpdA/CobB, increasing the enolase activity.

Its subcellular location is the cytoplasm. It is found in the secreted. The protein resides in the cell surface. The catalysed reaction is (2R)-2-phosphoglycerate = phosphoenolpyruvate + H2O. It participates in carbohydrate degradation; glycolysis; pyruvate from D-glyceraldehyde 3-phosphate: step 4/5. Functionally, catalyzes the reversible conversion of 2-phosphoglycerate (2-PG) into phosphoenolpyruvate (PEP). It is essential for the degradation of carbohydrates via glycolysis. In Proteus mirabilis (strain HI4320), this protein is Enolase.